Here is a 392-residue protein sequence, read N- to C-terminus: Phosphoglycerate kinase (392 aa).

Residues 21 to 23 (DLN), Arg-36, 59 to 62 (HRGR), Arg-113, and Arg-146 each bind substrate. ATP contacts are provided by residues Lys-197, Glu-314, and 340 to 343 (GGDT).

This sequence belongs to the phosphoglycerate kinase family. Monomer.

Its subcellular location is the cytoplasm. The catalysed reaction is (2R)-3-phosphoglycerate + ATP = (2R)-3-phospho-glyceroyl phosphate + ADP. It participates in carbohydrate degradation; glycolysis; pyruvate from D-glyceraldehyde 3-phosphate: step 2/5. The sequence is that of Phosphoglycerate kinase from Vesicomyosocius okutanii subsp. Calyptogena okutanii (strain HA).